We begin with the raw amino-acid sequence, 636 residues long: Amylosucrase (636 aa).

Substrate-binding residues include Asp152, His195, Gln262, and Arg292. Residue Asp294 is the Nucleophile of the active site. Glu336 (proton donor) is an active-site residue. Residues His400, Asp401, and Arg517 each coordinate substrate.

It belongs to the glycosyl hydrolase 13 family. In terms of assembly, monomer.

The protein resides in the secreted. The enzyme catalyses [(1-&gt;4)-alpha-D-glucosyl](n) + sucrose = [(1-&gt;4)-alpha-D-glucosyl](n+1) + D-fructose. Its activity is regulated as follows. Amylosucrase favors hydrolysis at low sucrose concentrations, and polymerization at high sucrose concentrations. Competitively inhibited by fructose. Catalyzes the synthesis of alpha-glucan from sucrose. Catalyzes, in addition, sucrose hydrolysis, maltose and maltotriose synthesis by successive transfers of the glucosyl moiety of sucrose onto the released glucose, and finally turanose and trehalulose synthesis, these two sucrose isomers being obtained by glucosyl transfer onto fructose. In Neisseria polysaccharea, this protein is Amylosucrase (ams).